The sequence spans 858 residues: Adenylate cyclase, germination specific (858 aa).

Residues 1–18 (MKKTFVKILSKSYVEGYP) lie on the Cytoplasmic side of the membrane. A helical; Signal-anchor for type II membrane protein transmembrane segment spans residues 19–41 (VGFFIGLIILAIFGSMVCIFSFM). Topologically, residues 42-858 (HYSEEENSNI…DENVESKKNK (817 aa)) are extracellular. One can recognise a CHASE domain in the interval 86–317 (VNPNFDRNDF…DCVLKLWIFT (232 aa)). The 131-residue stretch at 396–526 (CVFFLDIAGF…DTVNVASRME (131 aa)) folds into the Guanylate cyclase domain. D401, I402, and D445 together coordinate Mg(2+). 3 disordered regions span residues 650–691 (YYYH…YHDT), 767–803 (SDNV…STNE), and 827–858 (ENCD…KKNK). 3 stretches are compositionally biased toward low complexity: residues 767-778 (SDNVNNYENNNN), 788-797 (GDNNNINDNN), and 834-849 (DNNN…NNND).

It belongs to the adenylyl cyclase class-4/guanylyl cyclase family.

Its subcellular location is the membrane. The catalysed reaction is ATP = 3',5'-cyclic AMP + diphosphate. Its activity is regulated as follows. Insensitive to guanine nucleotides. Functionally, has a large extracellular domain which may be involved in the recognition of an extracellular signal present during germination, leading to activation or inhibition of cAMP synthesis by the cytoplasmic domain. The chain is Adenylate cyclase, germination specific (acgA) from Dictyostelium discoideum (Social amoeba).